A 455-amino-acid polypeptide reads, in one-letter code: Bifunctional protein GlmU (455 aa).

Residues 1–229 (MLNSAMSVVI…ISETEGVNNR (229 aa)) are pyrophosphorylase. UDP-N-acetyl-alpha-D-glucosamine-binding positions include 11-14 (LAAG), lysine 25, glutamine 76, 81-82 (GT), 103-105 (YGD), glycine 140, glutamate 154, asparagine 169, and asparagine 227. Aspartate 105 is a Mg(2+) binding site. Asparagine 227 contributes to the Mg(2+) binding site. Positions 230–250 (LQLSRLERIYQAEQAEKLLLA) are linker. Residues 251–455 (GVMLRDPARF…KQGWQRPVKK (205 aa)) are N-acetyltransferase. The UDP-N-acetyl-alpha-D-glucosamine site is built by arginine 333 and lysine 351. Residue histidine 363 is the Proton acceptor of the active site. Tyrosine 366 and asparagine 377 together coordinate UDP-N-acetyl-alpha-D-glucosamine. Acetyl-CoA-binding positions include alanine 380, 386–387 (NY), serine 405, alanine 423, and arginine 440.

The protein in the N-terminal section; belongs to the N-acetylglucosamine-1-phosphate uridyltransferase family. It in the C-terminal section; belongs to the transferase hexapeptide repeat family. As to quaternary structure, homotrimer. Mg(2+) serves as cofactor.

Its subcellular location is the cytoplasm. It catalyses the reaction alpha-D-glucosamine 1-phosphate + acetyl-CoA = N-acetyl-alpha-D-glucosamine 1-phosphate + CoA + H(+). The enzyme catalyses N-acetyl-alpha-D-glucosamine 1-phosphate + UTP + H(+) = UDP-N-acetyl-alpha-D-glucosamine + diphosphate. It functions in the pathway nucleotide-sugar biosynthesis; UDP-N-acetyl-alpha-D-glucosamine biosynthesis; N-acetyl-alpha-D-glucosamine 1-phosphate from alpha-D-glucosamine 6-phosphate (route II): step 2/2. Its pathway is nucleotide-sugar biosynthesis; UDP-N-acetyl-alpha-D-glucosamine biosynthesis; UDP-N-acetyl-alpha-D-glucosamine from N-acetyl-alpha-D-glucosamine 1-phosphate: step 1/1. The protein operates within bacterial outer membrane biogenesis; LPS lipid A biosynthesis. In terms of biological role, catalyzes the last two sequential reactions in the de novo biosynthetic pathway for UDP-N-acetylglucosamine (UDP-GlcNAc). The C-terminal domain catalyzes the transfer of acetyl group from acetyl coenzyme A to glucosamine-1-phosphate (GlcN-1-P) to produce N-acetylglucosamine-1-phosphate (GlcNAc-1-P), which is converted into UDP-GlcNAc by the transfer of uridine 5-monophosphate (from uridine 5-triphosphate), a reaction catalyzed by the N-terminal domain. The chain is Bifunctional protein GlmU from Salmonella arizonae (strain ATCC BAA-731 / CDC346-86 / RSK2980).